The chain runs to 427 residues: Glutamate-1-semialdehyde 2,1-aminomutase (427 aa).

Residue K265 is modified to N6-(pyridoxal phosphate)lysine.

The protein belongs to the class-III pyridoxal-phosphate-dependent aminotransferase family. HemL subfamily. In terms of assembly, homodimer. Pyridoxal 5'-phosphate is required as a cofactor.

The protein localises to the cytoplasm. It catalyses the reaction (S)-4-amino-5-oxopentanoate = 5-aminolevulinate. It participates in porphyrin-containing compound metabolism; protoporphyrin-IX biosynthesis; 5-aminolevulinate from L-glutamyl-tRNA(Glu): step 2/2. This Bordetella bronchiseptica (strain ATCC BAA-588 / NCTC 13252 / RB50) (Alcaligenes bronchisepticus) protein is Glutamate-1-semialdehyde 2,1-aminomutase.